The primary structure comprises 299 residues: tRNA dimethylallyltransferase (299 aa).

10–17 contributes to the ATP binding site; it reads GPTAVGKT. 12–17 is a substrate binding site; the sequence is TAVGKT. Residues 35–38 form an interaction with substrate tRNA region; the sequence is DSQQ.

Belongs to the IPP transferase family. In terms of assembly, monomer. Mg(2+) serves as cofactor.

The enzyme catalyses adenosine(37) in tRNA + dimethylallyl diphosphate = N(6)-dimethylallyladenosine(37) in tRNA + diphosphate. In terms of biological role, catalyzes the transfer of a dimethylallyl group onto the adenine at position 37 in tRNAs that read codons beginning with uridine, leading to the formation of N6-(dimethylallyl)adenosine (i(6)A). This chain is tRNA dimethylallyltransferase, found in Streptococcus thermophilus (strain ATCC BAA-491 / LMD-9).